The following is a 323-amino-acid chain: V-type ATP synthase subunit C (323 aa).

This sequence belongs to the V-ATPase V0D/AC39 subunit family.

In terms of biological role, produces ATP from ADP in the presence of a proton gradient across the membrane. In Thermus thermophilus (strain ATCC 27634 / DSM 579 / HB8), this protein is V-type ATP synthase subunit C (atpC).